The following is a 507-amino-acid chain: Nuclear poly(A) polymerase 3 (507 aa).

Residues 79-81 (YGS), 91-94 (SDID), Asp147, Lys208, Tyr217, and 226-227 (GV) each bind ATP. The Mg(2+) site is built by Asp92, Asp94, and Asp147.

Belongs to the poly(A) polymerase family. In terms of assembly, monomer. Forms a complex with cleavage and polyadenylation specificity factor (CPSF) subunits FIPS5 and CPSF30. Mg(2+) serves as cofactor. Mn(2+) is required as a cofactor. In terms of tissue distribution, expressed in leaves (mostly in petioles and tips), cotyledon, roots (tips, vascular tissue of the radicle, and throughout the root tissue excluding the elongation zone), stems, and flowers (restricted to the stigma and the pollen in mature anthers). Active in the primary and secondary root systems.

It is found in the nucleus. The enzyme catalyses RNA(n) + ATP = RNA(n)-3'-adenine ribonucleotide + diphosphate. In terms of biological role, essential protein. Polymerase that creates the 3'-poly(A) tail of mRNA's. Also required for the endoribonucleolytic cleavage reaction at some polyadenylation sites. May acquire specificity through interaction with a cleavage and polyadenylation specificity factor (CPSF) at its C-terminus. In Arabidopsis thaliana (Mouse-ear cress), this protein is Nuclear poly(A) polymerase 3.